The primary structure comprises 78 residues: UPF0291 protein ABC2165 (78 aa).

The interval 56-78 (AKGNDVTPQKLKDSKAQKHKRLH) is disordered.

The protein belongs to the UPF0291 family.

It is found in the cytoplasm. This Shouchella clausii (strain KSM-K16) (Alkalihalobacillus clausii) protein is UPF0291 protein ABC2165.